Reading from the N-terminus, the 154-residue chain is Transcription antitermination protein NusB (154 aa).

The protein belongs to the NusB family.

Its function is as follows. Involved in transcription antitermination. Required for transcription of ribosomal RNA (rRNA) genes. Binds specifically to the boxA antiterminator sequence of the ribosomal RNA (rrn) operons. The chain is Transcription antitermination protein NusB from Rickettsia typhi (strain ATCC VR-144 / Wilmington).